Reading from the N-terminus, the 254-residue chain is Pimeloyl-[acyl-carrier protein] methyl ester esterase (254 aa).

The 225-residue stretch at 14–238 (VVMLHGWGLH…QASHAPFLSH (225 aa)) folds into the AB hydrolase-1 domain. Substrate contacts are provided by residues Trp-20, 80–81 (SL), and 142–146 (FLALQ). The active-site Nucleophile is Ser-80. Catalysis depends on residues Asp-204 and His-232. Position 232 (His-232) interacts with substrate.

It belongs to the AB hydrolase superfamily. Carboxylesterase BioH family. In terms of assembly, monomer.

Its subcellular location is the cytoplasm. It catalyses the reaction 6-carboxyhexanoyl-[ACP] methyl ester + H2O = 6-carboxyhexanoyl-[ACP] + methanol + H(+). Its pathway is cofactor biosynthesis; biotin biosynthesis. The physiological role of BioH is to remove the methyl group introduced by BioC when the pimeloyl moiety is complete. It allows to synthesize pimeloyl-ACP via the fatty acid synthetic pathway through the hydrolysis of the ester bonds of pimeloyl-ACP esters. The protein is Pimeloyl-[acyl-carrier protein] methyl ester esterase of Chromobacterium violaceum (strain ATCC 12472 / DSM 30191 / JCM 1249 / CCUG 213 / NBRC 12614 / NCIMB 9131 / NCTC 9757 / MK).